The sequence spans 585 residues: Proline--tRNA ligase (585 aa).

Residue K173 forms an Isoglutamyl lysine isopeptide (Lys-Gln) (interchain with Q-Cter in protein Pup) linkage.

The protein belongs to the class-II aminoacyl-tRNA synthetase family. ProS type 1 subfamily. As to quaternary structure, homodimer.

It localises to the cytoplasm. It carries out the reaction tRNA(Pro) + L-proline + ATP = L-prolyl-tRNA(Pro) + AMP + diphosphate. Catalyzes the attachment of proline to tRNA(Pro) in a two-step reaction: proline is first activated by ATP to form Pro-AMP and then transferred to the acceptor end of tRNA(Pro). As ProRS can inadvertently accommodate and process non-cognate amino acids such as alanine and cysteine, to avoid such errors it has two additional distinct editing activities against alanine. One activity is designated as 'pretransfer' editing and involves the tRNA(Pro)-independent hydrolysis of activated Ala-AMP. The other activity is designated 'posttransfer' editing and involves deacylation of mischarged Ala-tRNA(Pro). The misacylated Cys-tRNA(Pro) is not edited by ProRS. The chain is Proline--tRNA ligase (proS) from Mycolicibacterium smegmatis (strain ATCC 700084 / mc(2)155) (Mycobacterium smegmatis).